The chain runs to 193 residues: MANMKNSNDRIILFRKAGEKVDATKMLFLTEYGLSHEADTDTEDTMDGSYNTGGSVESTMSGTAKMFYGDDFADEIEDAVVDRVLYEAWEVESRIPGKNGDATKFKAKYFQGFHNKFELKAEANGIDEYEYEYGVNGRFQRGFATLPEAVTKKLKATGYRFHDTTKADALTGEDLTAIPQPKVDSSTVTPGEV.

The protein localises to the virion. The sequence is that of Putative tail protein from Staphylococcus phage phiMR25.